The chain runs to 201 residues: Small ribosomal subunit protein uS4c (201 aa).

The disordered stretch occupies residues 15 to 43; it reads LGALPGLTRKTPKSGSNQKKKFHSGKKEQ. One can recognise an S4 RNA-binding domain in the interval 89-150; sequence MRLDNILFRL…NQRSKRLVQN (62 aa).

Belongs to the universal ribosomal protein uS4 family. In terms of assembly, part of the 30S ribosomal subunit. Contacts protein S5. The interaction surface between S4 and S5 is involved in control of translational fidelity.

The protein resides in the plastid. It localises to the chloroplast. Its function is as follows. One of the primary rRNA binding proteins, it binds directly to 16S rRNA where it nucleates assembly of the body of the 30S subunit. In terms of biological role, with S5 and S12 plays an important role in translational accuracy. This chain is Small ribosomal subunit protein uS4c (rps4), found in Sorghum bicolor (Sorghum).